A 73-amino-acid chain; its full sequence is Putative membrane protein insertion efficiency factor (73 aa).

Belongs to the UPF0161 family.

Its subcellular location is the cell inner membrane. Functionally, could be involved in insertion of integral membrane proteins into the membrane. This chain is Putative membrane protein insertion efficiency factor, found in Dinoroseobacter shibae (strain DSM 16493 / NCIMB 14021 / DFL 12).